Consider the following 357-residue polypeptide: Acyl-coenzyme A diphosphatase NUDT19 (357 aa).

Residues 10–242 (AATVMLAAGW…IWLAPPQFYE (233 aa)) form the Nudix hydrolase domain. The Nudix box signature appears at 97–118 (AALPDDVALRICAIRETFEEAG). 2 residues coordinate Mg(2+): glutamate 112 and glutamate 116. At lysine 300 the chain carries N6-succinyllysine. The short motif at 355–357 (ARL) is the Microbody targeting signal element.

It belongs to the Nudix hydrolase family. In terms of assembly, monomer. Mg(2+) serves as cofactor. It depends on Mn(2+) as a cofactor.

The protein localises to the peroxisome. The enzyme catalyses an acyl-CoA + H2O = an acyl-4'-phosphopantetheine + adenosine 3',5'-bisphosphate + 2 H(+). The catalysed reaction is CoA + H2O = (R)-4'-phosphopantetheine + adenosine 3',5'-bisphosphate + 2 H(+). It catalyses the reaction hexanoyl-CoA + H2O = hexanoyl-4'-phosphopantetheine + adenosine 3',5'-bisphosphate + 2 H(+). It carries out the reaction octanoyl-CoA + H2O = S-octanoyl-4'-phosphopantetheine + adenosine 3',5'-bisphosphate + 2 H(+). The enzyme catalyses butanoyl-CoA + H2O = S-butanoyl-4'-phosphopantetheine + adenosine 3',5'-bisphosphate + 2 H(+). The catalysed reaction is propanoyl-CoA + H2O = propanoyl-4'-phosphopantetheine + adenosine 3',5'-bisphosphate + 2 H(+). It catalyses the reaction malonyl-CoA + H2O = malonyl-4'-phosphopantetheine + adenosine 3',5'-bisphosphate + 2 H(+). It carries out the reaction succinyl-CoA + H2O = succinyl-4'-phosphopantetheine + adenosine 3',5'-bisphosphate + 2 H(+). The enzyme catalyses choloyl-CoA + H2O = S-choloyl-4'-phosphopantetheine + adenosine 3',5'-bisphosphate + 2 H(+). The catalysed reaction is 4,8-dimethylnonanoyl-CoA + H2O = S-(4,8-dimethylnonanoyl)-4'-phosphopantetheine + adenosine 3',5'-bisphosphate + 2 H(+). It catalyses the reaction (9Z,12Z,15Z)-octadecatrienoyl-CoA + H2O = S-(9Z,12Z,15Z-octadecatrienoyl)-4'-phosphopantetheine + adenosine 3',5'-bisphosphate + 2 H(+). It carries out the reaction (9Z,12Z)-octadecadienoyl-CoA + H2O = S-(9Z,12Z-octadecadienoyl)-4'-phosphopantetheine + adenosine 3',5'-bisphosphate + 2 H(+). The enzyme catalyses (9Z)-hexadecenoyl-CoA + H2O = S-(9Z-hexadecenoyl)-4'-phosphopantetheine + adenosine 3',5'-bisphosphate + 2 H(+). The catalysed reaction is (9Z)-tetradecenoyl-CoA + H2O = S-(9Z-tetradecenoyl)-4'-phosphopantetheine + adenosine 3',5'-bisphosphate + 2 H(+). It catalyses the reaction (6Z)-octenoyl-CoA + H2O = S-(6Z-octenoyl)-4'-phosphopantetheine + adenosine 3',5'-bisphosphate + 2 H(+). It carries out the reaction hexadecanoyl-CoA + H2O = S-hexadecanoyl-4'-phosphopantetheine + adenosine 3',5'-bisphosphate + 2 H(+). The enzyme catalyses tetradecanoyl-CoA + H2O = tetradecanoyl-4'-phosphopantetheine + adenosine 3',5'-bisphosphate + 2 H(+). The catalysed reaction is dodecanoyl-CoA + H2O = S-dodecanoyl-4'-phosphopantetheine + adenosine 3',5'-bisphosphate + 2 H(+). It catalyses the reaction a 5'-end CoA-ribonucleoside in mRNA + H2O = a 5'-end phospho-adenosine-phospho-ribonucleoside in mRNA + (R)-4'-phosphopantetheine + 2 H(+). Fatty acyl-coenzyme A (CoA) diphosphatase that hydrolyzes fatty acyl-CoA to yield acyl-4'-phosphopantetheine and adenosine 3',5'-bisphosphate. Mediates the hydrolysis of a wide range of CoA esters, including choloyl-CoA and branched-chain fatty-acyl-CoA esters and at low substrate concentrations medium and long-chain fatty-acyl-CoA esters are the primary substrates. Highest activity seen with medium-chain acyl-CoA esters and higher rates of activity seen with the unsaturated acyl-CoA esters compared with the saturated esters. Exhibits decapping activity towards dpCoA-capped RNAs in vitro. In Rattus norvegicus (Rat), this protein is Acyl-coenzyme A diphosphatase NUDT19 (Nudt19).